Reading from the N-terminus, the 316-residue chain is Biotin synthase (316 aa).

The region spanning 36–264 (TEIQISTLLS…ASRVRLAAGR (229 aa)) is the Radical SAM core domain. [4Fe-4S] cluster is bound by residues cysteine 51, cysteine 55, and cysteine 58. Positions 96, 127, 187, and 259 each coordinate [2Fe-2S] cluster.

Belongs to the radical SAM superfamily. Biotin synthase family. Homodimer. The cofactor is [4Fe-4S] cluster. Requires [2Fe-2S] cluster as cofactor.

It catalyses the reaction (4R,5S)-dethiobiotin + (sulfur carrier)-SH + 2 reduced [2Fe-2S]-[ferredoxin] + 2 S-adenosyl-L-methionine = (sulfur carrier)-H + biotin + 2 5'-deoxyadenosine + 2 L-methionine + 2 oxidized [2Fe-2S]-[ferredoxin]. It functions in the pathway cofactor biosynthesis; biotin biosynthesis; biotin from 7,8-diaminononanoate: step 2/2. In terms of biological role, catalyzes the conversion of dethiobiotin (DTB) to biotin by the insertion of a sulfur atom into dethiobiotin via a radical-based mechanism. This chain is Biotin synthase, found in Gluconacetobacter diazotrophicus (strain ATCC 49037 / DSM 5601 / CCUG 37298 / CIP 103539 / LMG 7603 / PAl5).